Consider the following 274-residue polypeptide: Diaminopimelate epimerase (274 aa).

The substrate site is built by N11 and N65. Residue C74 is the Proton donor of the active site. Substrate-binding positions include 75–76 (GN), N158, N191, and 209–210 (ER). C218 functions as the Proton acceptor in the catalytic mechanism. Position 219–220 (219–220 (GT)) interacts with substrate.

Belongs to the diaminopimelate epimerase family. In terms of assembly, homodimer.

The protein localises to the cytoplasm. It carries out the reaction (2S,6S)-2,6-diaminopimelate = meso-2,6-diaminopimelate. It functions in the pathway amino-acid biosynthesis; L-lysine biosynthesis via DAP pathway; DL-2,6-diaminopimelate from LL-2,6-diaminopimelate: step 1/1. Functionally, catalyzes the stereoinversion of LL-2,6-diaminopimelate (L,L-DAP) to meso-diaminopimelate (meso-DAP), a precursor of L-lysine and an essential component of the bacterial peptidoglycan. The polypeptide is Diaminopimelate epimerase (Carboxydothermus hydrogenoformans (strain ATCC BAA-161 / DSM 6008 / Z-2901)).